Reading from the N-terminus, the 545-residue chain is Glucose-6-phosphate isomerase (545 aa).

The active-site Proton donor is the Glu-351. Residues His-382 and Lys-510 contribute to the active site.

The protein belongs to the GPI family.

Its subcellular location is the cytoplasm. The catalysed reaction is alpha-D-glucose 6-phosphate = beta-D-fructose 6-phosphate. It participates in carbohydrate biosynthesis; gluconeogenesis. Its pathway is carbohydrate degradation; glycolysis; D-glyceraldehyde 3-phosphate and glycerone phosphate from D-glucose: step 2/4. Functionally, catalyzes the reversible isomerization of glucose-6-phosphate to fructose-6-phosphate. This is Glucose-6-phosphate isomerase from Shewanella sp. (strain ANA-3).